We begin with the raw amino-acid sequence, 275 residues long: NH(3)-dependent NAD(+) synthetase (275 aa).

Position 50–57 (50–57) interacts with ATP; it reads GISGGVDS. A Mg(2+)-binding site is contributed by D56. R147 serves as a coordination point for deamido-NAD(+). T167 serves as a coordination point for ATP. E172 is a binding site for Mg(2+). Deamido-NAD(+)-binding residues include K180 and D187. 2 residues coordinate ATP: K196 and T218. 267–268 lines the deamido-NAD(+) pocket; the sequence is HK.

The protein belongs to the NAD synthetase family. As to quaternary structure, homodimer.

It catalyses the reaction deamido-NAD(+) + NH4(+) + ATP = AMP + diphosphate + NAD(+) + H(+). It participates in cofactor biosynthesis; NAD(+) biosynthesis; NAD(+) from deamido-NAD(+) (ammonia route): step 1/1. In terms of biological role, catalyzes the ATP-dependent amidation of deamido-NAD to form NAD. Uses ammonia as a nitrogen source. This is NH(3)-dependent NAD(+) synthetase from Pseudomonas savastanoi pv. phaseolicola (strain 1448A / Race 6) (Pseudomonas syringae pv. phaseolicola (strain 1448A / Race 6)).